The primary structure comprises 235 residues: Octanoyltransferase (235 aa).

Positions 30–214 constitute a BPL/LPL catalytic domain; sequence NELEDTLLLL…YFGKVFGAKF (185 aa). Substrate is bound by residues 75–82, 144–146, and 157–159; these read RGGDVTYH, AIG, and GFA. Cys-175 acts as the Acyl-thioester intermediate in catalysis.

Belongs to the LipB family.

The protein resides in the cytoplasm. The catalysed reaction is octanoyl-[ACP] + L-lysyl-[protein] = N(6)-octanoyl-L-lysyl-[protein] + holo-[ACP] + H(+). It functions in the pathway protein modification; protein lipoylation via endogenous pathway; protein N(6)-(lipoyl)lysine from octanoyl-[acyl-carrier-protein]: step 1/2. In terms of biological role, catalyzes the transfer of endogenously produced octanoic acid from octanoyl-acyl-carrier-protein onto the lipoyl domains of lipoate-dependent enzymes. Lipoyl-ACP can also act as a substrate although octanoyl-ACP is likely to be the physiological substrate. This is Octanoyltransferase from Caldicellulosiruptor saccharolyticus (strain ATCC 43494 / DSM 8903 / Tp8T 6331).